A 349-amino-acid polypeptide reads, in one-letter code: Flap endonuclease 1 (349 aa).

The tract at residues 1-98 is N-domain; sequence MDLGEIVEDV…EEIERRKRAK (98 aa). D27, D80, E152, E154, D173, D175, and D236 together coordinate Mg(2+). An I-domain region spans residues 116 to 258; sequence EIRKYAQAAV…TALRIIKKYN (143 aa). The interaction with PCNA stretch occupies residues 341–349; it reads KQTGLDQWF.

This sequence belongs to the XPG/RAD2 endonuclease family. FEN1 subfamily. Interacts with PCNA. PCNA stimulates the nuclease activity without altering cleavage specificity. Mg(2+) is required as a cofactor.

Its function is as follows. Structure-specific nuclease with 5'-flap endonuclease and 5'-3' exonuclease activities involved in DNA replication and repair. During DNA replication, cleaves the 5'-overhanging flap structure that is generated by displacement synthesis when DNA polymerase encounters the 5'-end of a downstream Okazaki fragment. Binds the unpaired 3'-DNA end and kinks the DNA to facilitate 5' cleavage specificity. Cleaves one nucleotide into the double-stranded DNA from the junction in flap DNA, leaving a nick for ligation. Also involved in the base excision repair (BER) pathway. Acts as a genome stabilization factor that prevents flaps from equilibrating into structures that lead to duplications and deletions. Also possesses 5'-3' exonuclease activity on nicked or gapped double-stranded DNA. The protein is Flap endonuclease 1 of Sulfolobus acidocaldarius (strain ATCC 33909 / DSM 639 / JCM 8929 / NBRC 15157 / NCIMB 11770).